The chain runs to 70 residues: DNA-directed RNA polymerase subunit epsilon (70 aa).

It belongs to the RNA polymerase subunit epsilon family. In terms of assembly, RNAP is composed of a core of 2 alpha, a beta and a beta' subunit. The core is associated with a delta subunit, and at least one of epsilon or omega. When a sigma factor is associated with the core the holoenzyme is formed, which can initiate transcription.

It carries out the reaction RNA(n) + a ribonucleoside 5'-triphosphate = RNA(n+1) + diphosphate. A non-essential component of RNA polymerase (RNAP). The sequence is that of DNA-directed RNA polymerase subunit epsilon from Leuconostoc mesenteroides subsp. mesenteroides (strain ATCC 8293 / DSM 20343 / BCRC 11652 / CCM 1803 / JCM 6124 / NCDO 523 / NBRC 100496 / NCIMB 8023 / NCTC 12954 / NRRL B-1118 / 37Y).